Reading from the N-terminus, the 342-residue chain is Phenylalanine--tRNA ligase alpha subunit (342 aa).

Glu260 serves as a coordination point for Mg(2+).

This sequence belongs to the class-II aminoacyl-tRNA synthetase family. Phe-tRNA synthetase alpha subunit type 1 subfamily. Tetramer of two alpha and two beta subunits. Mg(2+) is required as a cofactor.

The protein localises to the cytoplasm. It catalyses the reaction tRNA(Phe) + L-phenylalanine + ATP = L-phenylalanyl-tRNA(Phe) + AMP + diphosphate + H(+). The protein is Phenylalanine--tRNA ligase alpha subunit of Mycobacterium avium (strain 104).